Consider the following 152-residue polypeptide: Transcriptional regulator MraZ (152 aa).

SpoVT-AbrB domains lie at 7 to 54 and 83 to 126; these read INSI…TMDE and ASEM…SQEA.

It belongs to the MraZ family. As to quaternary structure, forms oligomers.

It is found in the cytoplasm. The protein localises to the nucleoid. This Hydrogenovibrio crunogenus (strain DSM 25203 / XCL-2) (Thiomicrospira crunogena) protein is Transcriptional regulator MraZ.